A 1238-amino-acid polypeptide reads, in one-letter code: uncharacterized protein (1238 aa).

Disordered regions lie at residues 1–38 (MSSKRRNKNNKNNNKNNNKNNDNNNNIEQQDDIEDISS), 122–156 (SSTPISQLSPFKTPSPPSSSSSSSQSPLRKPRPSF), 229–439 (PKNN…KNKE), 660–1016 (KNKL…TGAA), 1051–1083 (EEEDDEEEKEQQNNNNNINSNSKNNNVNNKLNS), and 1098–1191 (KKSG…NASR). Low complexity-rich tracts occupy residues 10–26 (NKNNNKNNNKNNDNNNN), 129–149 (LSPFKTPSPPSSSSSSSQSPL), and 234–276 (QIDS…TQSQ). Positions 317–343 (ELQNQTQINKSKQDLTNISQKINITTS) are enriched in polar residues. The span at 344-361 (QHDKDDLGEYRMSEKGGG) shows a compositional bias: basic and acidic residues. A compositionally biased stretch (acidic residues) spans 362 to 372 (DDGDDDDDYDN). Residues 383–394 (TNKKQQQQHHHK) show a composition bias toward basic residues. Over residues 395–416 (GKEESQSEYYEKEKEKEKEDIA) the composition is skewed to basic and acidic residues. Low complexity-rich tracts occupy residues 417 to 435 (TTRATTTTKSTDNSNNNIN), 678 to 691 (QQQQQQKQQQQQQE), and 712 to 792 (QPSQ…QEKQ). The span at 793–805 (QSQEKHQSQEKHQ) shows a compositional bias: basic and acidic residues. 2 stretches are compositionally biased toward low complexity: residues 806 to 859 (SQQS…SQQK) and 882 to 906 (SQSQSDLSQQFLSQSQSQSQSQSQR). Positions 916–927 (ENQDSENLDDTV) are enriched in acidic residues. Positions 929–944 (MNYNQIPSTLDHSTLQ) are enriched in polar residues. A compositionally biased stretch (basic and acidic residues) spans 966 to 975 (EIERRRRELA). A compositionally biased stretch (acidic residues) spans 976-990 (GEDSDEEFEILDEDQ). Composition is skewed to low complexity over residues 1062–1083 (QNNNNNINSNSKNNNVNNKLNS) and 1108–1121 (SSSSTNFYSSNKKN). A compositionally biased stretch (polar residues) spans 1123–1133 (PQPTKSVNKPR). The segment covering 1142–1181 (SQNRQKQSEQQQQQPQQQPQLPQQQQQQQQQQQLRQQQNE) has biased composition (low complexity). The segment covering 1182 to 1191 (NTISSLNASR) has biased composition (polar residues).

This is an uncharacterized protein from Dictyostelium discoideum (Social amoeba).